The primary structure comprises 166 residues: Small ribosomal subunit protein cS23z (166 aa).

It belongs to the chloroplast-specific ribosomal protein cS23 family. In terms of assembly, part of the 30S ribosomal subunit.

Its subcellular location is the plastid. It is found in the chloroplast. Its function is as follows. Component of the chloroplast ribosome (chloro-ribosome), a dedicated translation machinery responsible for the synthesis of chloroplast genome-encoded proteins, including proteins of the transcription and translation machinery and components of the photosynthetic apparatus. This chain is Small ribosomal subunit protein cS23z, found in Arabidopsis thaliana (Mouse-ear cress).